We begin with the raw amino-acid sequence, 121 residues long: Large ribosomal subunit protein bL20 (121 aa).

This sequence belongs to the bacterial ribosomal protein bL20 family.

Binds directly to 23S ribosomal RNA and is necessary for the in vitro assembly process of the 50S ribosomal subunit. It is not involved in the protein synthesizing functions of that subunit. The chain is Large ribosomal subunit protein bL20 (rplT) from Chlamydia pneumoniae (Chlamydophila pneumoniae).